We begin with the raw amino-acid sequence, 715 residues long: MQRRTRGASSLRLARCLTPANLIRGDNAGVPERRIFGGCLLPTPEGLLSAAVGALRQRSDDAQPAFLTCTDRSVRLAARQHNTVPESLIVDGLASDPHYEYIRHYASAATQALGEVELTGGQLSRAILTQYWKYLQTVVPSGLDVPEDPVGDCDPSLHVLLRPTLAPKLLARTPFKSGAAAAKYAATVAGLRDALHRIQQYMFFMRPADPSRPSTDTALRLNELLAYVSVLYRWASWMLWTTDKHVCHRLSPSNRRFLPLGGSPEAPAETFARHLDRGPSGTTGSMQCMALRAAVSDVLGHLTRLANLWQTGKRSGGTYGTVDTVVSTVEVLSIVHHHAQYIINATLTGYGVWATDSLNNEYLRAAVDSQERFCRTTAPLFPTMTAPSWARMELSIKAWFGAALAADLLRSGAPSLHYESILRLVASRRTTWSAGPPPDDMARGPGGHRAGGGTVGKRFSGPARQRAPAPPPTSPTLDPRGHPAVPEAPRGRPAPPLPDADDPVAEPPGCAAQPATYYTHMGEVPPRLPARNVAGPDRRPPAATCPLLVRRASLGSLDRPRGWGPAPEGEPDQMEATYLTADDDDDARRKATHAASARERHAPYEDDESIYETVSEDGGRVYEEIPWMRVYENVCANTANAAPASPYIEAENPLYDWGGSALFSPPPRPPPPPPLSPSPVLARHRANALTNDGPTNVAALSALLTKLKREGRRSR.

Disordered stretches follow at residues 432–513, 585–605, and 659–680; these read WSAG…CAAQ, DDAR…APYE, and GSAL…PSPV. Gly residues predominate over residues 444–455; the sequence is GPGGHRAGGGTV. 2 stretches are compositionally biased toward low complexity: residues 456-467 and 475-488; these read GKRFSGPARQRA and PTLD…VPEA. Pro residues predominate over residues 664–677; sequence SPPPRPPPPPPLSP.

Belongs to the herpesviridae HHV-1 VP11/12 protein family. As to quaternary structure, interacts with VP16. Interacts with host LCK, PIK3R1, SHC1 AND GRB2; these interactions promote the activation of the PI3K/AKT pathway. Interacts with host YWHAB. Interacts with ICP0; this interaction targets UL46 for degradation by the proteasome. In terms of processing, phosphorylated by host LCK. The phosphorylation seems to be lymphocyte-specific.

It localises to the virion tegument. The protein resides in the host cell membrane. Plays a role in the activation of the host PI3K/AKT pathway to promote cell survival. Interacts with and activates host LCK and thereby recruits downstream partners SHC1, GRB2 and PI3KR1 in order to activate the PI3K pathway by phosphorylating host AKT on its activating residues. This mechanism is inhibited by the viral protein US3 that instead promotes incorporation of UL46 into virions. This Human herpesvirus 1 (strain F) (HHV-1) protein is Tegument protein UL46.